The sequence spans 346 residues: 3-dehydroquinate synthase (346 aa).

NAD(+) contacts are provided by residues 62-67 (DGEEYK), 96-100 (GVISD), 120-121 (TT), lysine 133, lysine 142, and 160-163 (FLRT). Residues glutamate 175, histidine 234, and histidine 251 each coordinate Zn(2+).

The protein belongs to the sugar phosphate cyclases superfamily. Dehydroquinate synthase family. The cofactor is Co(2+). It depends on Zn(2+) as a cofactor. NAD(+) serves as cofactor.

It localises to the cytoplasm. The catalysed reaction is 7-phospho-2-dehydro-3-deoxy-D-arabino-heptonate = 3-dehydroquinate + phosphate. It participates in metabolic intermediate biosynthesis; chorismate biosynthesis; chorismate from D-erythrose 4-phosphate and phosphoenolpyruvate: step 2/7. Functionally, catalyzes the conversion of 3-deoxy-D-arabino-heptulosonate 7-phosphate (DAHP) to dehydroquinate (DHQ). The sequence is that of 3-dehydroquinate synthase from Campylobacter curvus (strain 525.92).